The chain runs to 420 residues: Serine--tRNA ligase (420 aa).

Residue 227-229 (TSE) coordinates L-serine. ATP-binding positions include 258-260 (RRE) and V274. Residue E281 coordinates L-serine. An ATP-binding site is contributed by 345–348 (EVTS). T379 provides a ligand contact to L-serine.

Belongs to the class-II aminoacyl-tRNA synthetase family. Type-1 seryl-tRNA synthetase subfamily. Homodimer. The tRNA molecule binds across the dimer.

The protein resides in the cytoplasm. It carries out the reaction tRNA(Ser) + L-serine + ATP = L-seryl-tRNA(Ser) + AMP + diphosphate + H(+). The enzyme catalyses tRNA(Sec) + L-serine + ATP = L-seryl-tRNA(Sec) + AMP + diphosphate + H(+). The protein operates within aminoacyl-tRNA biosynthesis; selenocysteinyl-tRNA(Sec) biosynthesis; L-seryl-tRNA(Sec) from L-serine and tRNA(Sec): step 1/1. Its function is as follows. Catalyzes the attachment of serine to tRNA(Ser). Is also able to aminoacylate tRNA(Sec) with serine, to form the misacylated tRNA L-seryl-tRNA(Sec), which will be further converted into selenocysteinyl-tRNA(Sec). In Acidothermus cellulolyticus (strain ATCC 43068 / DSM 8971 / 11B), this protein is Serine--tRNA ligase.